Reading from the N-terminus, the 162-residue chain is MSLLTPDIGLLFWMLLSFGIVFFVAAKYGFPVIVKMVDERNAFINKSLEEAKQANKRLRGIKEEEERLLKETYNKRIFIIKEANEMRIKIINDAKEKANFESNRLMKNAKENIQKEKELAMQDIRQQIAALSIDIAERVLRKSLDNKHEQLNLINELIKELN.

The chain crosses the membrane as a helical span at residues 6–26; that stretch reads PDIGLLFWMLLSFGIVFFVAA.

The protein belongs to the ATPase B chain family. F-type ATPases have 2 components, F(1) - the catalytic core - and F(0) - the membrane proton channel. F(1) has five subunits: alpha(3), beta(3), gamma(1), delta(1), epsilon(1). F(0) has three main subunits: a(1), b(2) and c(10-14). The alpha and beta chains form an alternating ring which encloses part of the gamma chain. F(1) is attached to F(0) by a central stalk formed by the gamma and epsilon chains, while a peripheral stalk is formed by the delta and b chains.

It is found in the cell inner membrane. F(1)F(0) ATP synthase produces ATP from ADP in the presence of a proton or sodium gradient. F-type ATPases consist of two structural domains, F(1) containing the extramembraneous catalytic core and F(0) containing the membrane proton channel, linked together by a central stalk and a peripheral stalk. During catalysis, ATP synthesis in the catalytic domain of F(1) is coupled via a rotary mechanism of the central stalk subunits to proton translocation. Functionally, component of the F(0) channel, it forms part of the peripheral stalk, linking F(1) to F(0). The protein is ATP synthase subunit b of Azobacteroides pseudotrichonymphae genomovar. CFP2.